Here is a 162-residue protein sequence, read N- to C-terminus: Cyclic pyranopterin monophosphate synthase (162 aa).

Substrate is bound by residues 75–77 (LCH) and 113–114 (ME). D128 is an active-site residue.

It belongs to the MoaC family. Homohexamer; trimer of dimers.

It catalyses the reaction (8S)-3',8-cyclo-7,8-dihydroguanosine 5'-triphosphate = cyclic pyranopterin phosphate + diphosphate. Its pathway is cofactor biosynthesis; molybdopterin biosynthesis. In terms of biological role, catalyzes the conversion of (8S)-3',8-cyclo-7,8-dihydroguanosine 5'-triphosphate to cyclic pyranopterin monophosphate (cPMP). The protein is Cyclic pyranopterin monophosphate synthase of Burkholderia orbicola (strain MC0-3).